Consider the following 305-residue polypeptide: Probable aspartoacylase (305 aa).

Residues His13 and Glu16 each coordinate Zn(2+). Residues Arg55 and 62–63 (NR) each bind substrate. His105 contacts Zn(2+). Substrate-binding residues include Glu163 and Tyr273.

Belongs to the AspA/AstE family. Aspartoacylase subfamily. Zn(2+) serves as cofactor.

It catalyses the reaction an N-acyl-L-aspartate + H2O = a carboxylate + L-aspartate. This Prochlorococcus marinus (strain NATL2A) protein is Probable aspartoacylase.